Reading from the N-terminus, the 505-residue chain is Probable folylpolyglutamate synthase (505 aa).

89-92 (GKGS) contributes to the ATP binding site. Residues Ser-121, Glu-190, and His-218 each contribute to the Mg(2+) site. ATP-binding residues include Arg-332 and Asp-346.

The protein belongs to the folylpolyglutamate synthase family. Requires a monovalent cation as cofactor.

The protein resides in the mitochondrion inner membrane. The protein localises to the mitochondrion matrix. It is found in the cytoplasm. The catalysed reaction is (6S)-5,6,7,8-tetrahydrofolyl-(gamma-L-Glu)(n) + L-glutamate + ATP = (6S)-5,6,7,8-tetrahydrofolyl-(gamma-L-Glu)(n+1) + ADP + phosphate + H(+). Its pathway is cofactor biosynthesis; tetrahydrofolylpolyglutamate biosynthesis. Its function is as follows. Catalyzes conversion of folates to polyglutamate derivatives allowing concentration of folate compounds in the cell and the intracellular retention of these cofactors, which are important substrates for most of the folate-dependent enzymes that are involved in one-carbon transfer reactions involved in purine, pyrimidine and amino acid synthesis. The polypeptide is Probable folylpolyglutamate synthase (met7) (Schizosaccharomyces pombe (strain 972 / ATCC 24843) (Fission yeast)).